A 265-amino-acid polypeptide reads, in one-letter code: uncharacterized protein (265 aa).

The protein localises to the mitochondrion. This is an uncharacterized protein from Paramecium tetraurelia.